The sequence spans 381 residues: MIRKIPSFIKIYESLIKIPTISSLNNKLDQSNKVLIDLLSNYFSELNFLINIKNIPNTNKFNMLASFGDGKGGILFSGHTDTVDFDEHLWTKDPFKLTEKNNKLYGLGTVDMKGFFAFILDALCSINIKSIKKPIYILATANEETDMSGARYFIQSSSIKPDFIIIGEPTSLKLVKAHKGHVSYSIDVVGNTGHSSNPANGINSIEIMHLVIKKLLKLKIYLREKYFHKDFSIGYPTMNFSSINGGNAINRICALCNLKFEIRPTPGLTLTQIEILIQEMLQAIFKKWPNRIFLKNLFFSVPPYEFPKEKKIIKKIENSCQLKPTTANYCTEAPFLGKIGPTLILGPGSIQQAHNADEYLDCSFIKPTKKIIRKLIKNFCY.

His79 serves as a coordination point for Zn(2+). Asp81 is an active-site residue. Residue Asp111 participates in Zn(2+) binding. Glu143 is an active-site residue. Zn(2+) is bound by residues Glu144, Glu168, and His354.

This sequence belongs to the peptidase M20A family. ArgE subfamily. In terms of assembly, homodimer. Zn(2+) serves as cofactor. Requires Co(2+) as cofactor. It depends on glutathione as a cofactor.

It localises to the cytoplasm. The catalysed reaction is N(2)-acetyl-L-ornithine + H2O = L-ornithine + acetate. It participates in amino-acid biosynthesis; L-arginine biosynthesis; L-ornithine from N(2)-acetyl-L-ornithine (linear): step 1/1. Catalyzes the hydrolysis of the amide bond of N(2)-acetylated L-amino acids. Cleaves the acetyl group from N-acetyl-L-ornithine to form L-ornithine, an intermediate in L-arginine biosynthesis pathway, and a branchpoint in the synthesis of polyamines. This is Acetylornithine deacetylase from Buchnera aphidicola subsp. Schizaphis graminum (strain Sg).